Consider the following 385-residue polypeptide: MDFGALPPEVNSGRMYCGPGSAPMVAAASAWNGLAAELSVAAVGYERVITTLQTEEWLGPASTLMVEAVAPYVAWMRATAIQAEQAASQARAAAAAYETAFAAIVPPPLIAANRARLTSLVTHNVFGQNTASIAATEAQYAEMWAQDAMAMYGYAGSSATATKVTPFAPPPNTTSPSAAATQLSAVAKAAGTSAGAAQSAIAELIAHLPNTLLGLTSPLSSALTAAATPGWLEWFINWYLPISQLFYNTVGLPYFAIGIGNSLITSWRALGWIGPEAAEAAAAAPAAVGAAVGGTGPVSAGLGNAATIGKLSLPPNWAGASPSLAPTVGSASAPLVSDIVEQPEAGAAGNLLGGMPLAGSGTGMGGAGPRYGFRVTVMSRPPFAG.

The protein belongs to the mycobacterial PPE family.

This is an uncharacterized protein from Mycobacterium tuberculosis (strain CDC 1551 / Oshkosh).